We begin with the raw amino-acid sequence, 201 residues long: Large ribosomal subunit protein bL25 (201 aa).

It belongs to the bacterial ribosomal protein bL25 family. CTC subfamily. In terms of assembly, part of the 50S ribosomal subunit; part of the 5S rRNA/L5/L18/L25 subcomplex. Contacts the 5S rRNA. Binds to the 5S rRNA independently of L5 and L18.

Its function is as follows. This is one of the proteins that binds to the 5S RNA in the ribosome where it forms part of the central protuberance. The protein is Large ribosomal subunit protein bL25 of Burkholderia cenocepacia (strain HI2424).